A 259-amino-acid chain; its full sequence is Global transcriptional regulator CodY (259 aa).

The segment at 1–155 (MSLLSRMRKI…GATVVGMEIL (155 aa)) is GAF domain. The segment at residues 203-222 (ASKIADRVGITRSVIVNALR) is a DNA-binding region (H-T-H motif). Residue serine 215 is modified to Phosphoserine.

The protein belongs to the CodY family.

The protein localises to the cytoplasm. Functionally, DNA-binding global transcriptional regulator which is involved in the adaptive response to starvation and acts by directly or indirectly controlling the expression of numerous genes in response to nutrient availability. During rapid exponential growth, CodY is highly active and represses genes whose products allow adaptation to nutrient depletion. The sequence is that of Global transcriptional regulator CodY from Halalkalibacterium halodurans (strain ATCC BAA-125 / DSM 18197 / FERM 7344 / JCM 9153 / C-125) (Bacillus halodurans).